A 214-amino-acid chain; its full sequence is Probable transaldolase (214 aa).

Catalysis depends on K83, which acts as the Schiff-base intermediate with substrate.

It belongs to the transaldolase family. Type 3B subfamily.

Its subcellular location is the cytoplasm. The enzyme catalyses D-sedoheptulose 7-phosphate + D-glyceraldehyde 3-phosphate = D-erythrose 4-phosphate + beta-D-fructose 6-phosphate. It functions in the pathway carbohydrate degradation; pentose phosphate pathway; D-glyceraldehyde 3-phosphate and beta-D-fructose 6-phosphate from D-ribose 5-phosphate and D-xylulose 5-phosphate (non-oxidative stage): step 2/3. Functionally, transaldolase is important for the balance of metabolites in the pentose-phosphate pathway. The protein is Probable transaldolase of Geotalea uraniireducens (strain Rf4) (Geobacter uraniireducens).